The chain runs to 1410 residues: DNA-directed RNA polymerase subunit beta' (1410 aa).

4 residues coordinate Zn(2+): cysteine 69, cysteine 71, cysteine 84, and cysteine 87. Aspartate 461, aspartate 463, and aspartate 465 together coordinate Mg(2+). Residues cysteine 810, cysteine 884, cysteine 891, and cysteine 894 each contribute to the Zn(2+) site.

The protein belongs to the RNA polymerase beta' chain family. In terms of assembly, the RNAP catalytic core consists of 2 alpha, 1 beta, 1 beta' and 1 omega subunit. When a sigma factor is associated with the core the holoenzyme is formed, which can initiate transcription. The cofactor is Mg(2+). Zn(2+) serves as cofactor.

The catalysed reaction is RNA(n) + a ribonucleoside 5'-triphosphate = RNA(n+1) + diphosphate. Its function is as follows. DNA-dependent RNA polymerase catalyzes the transcription of DNA into RNA using the four ribonucleoside triphosphates as substrates. This Ehrlichia chaffeensis (strain ATCC CRL-10679 / Arkansas) protein is DNA-directed RNA polymerase subunit beta'.